A 435-amino-acid chain; its full sequence is 3-phosphoshikimate 1-carboxyvinyltransferase (435 aa).

Residues Lys-15, Ser-16, and Arg-20 each coordinate 3-phosphoshikimate. Residue Lys-15 participates in phosphoenolpyruvate binding. 2 residues coordinate phosphoenolpyruvate: Gly-96 and Arg-124. 3-phosphoshikimate-binding residues include Ser-169, Gln-171, Ser-195, Asp-319, and Lys-346. A phosphoenolpyruvate-binding site is contributed by Gln-171. Catalysis depends on Asp-319, which acts as the Proton acceptor. Arg-350 and Arg-395 together coordinate phosphoenolpyruvate.

This sequence belongs to the EPSP synthase family. In terms of assembly, monomer.

The protein localises to the cytoplasm. It carries out the reaction 3-phosphoshikimate + phosphoenolpyruvate = 5-O-(1-carboxyvinyl)-3-phosphoshikimate + phosphate. Its pathway is metabolic intermediate biosynthesis; chorismate biosynthesis; chorismate from D-erythrose 4-phosphate and phosphoenolpyruvate: step 6/7. Functionally, catalyzes the transfer of the enolpyruvyl moiety of phosphoenolpyruvate (PEP) to the 5-hydroxyl of shikimate-3-phosphate (S3P) to produce enolpyruvyl shikimate-3-phosphate and inorganic phosphate. The protein is 3-phosphoshikimate 1-carboxyvinyltransferase of Chlorobium phaeobacteroides (strain BS1).